The primary structure comprises 250 residues: 5-oxoprolinase subunit A (250 aa).

This sequence belongs to the LamB/PxpA family. As to quaternary structure, forms a complex composed of PxpA, PxpB and PxpC.

The enzyme catalyses 5-oxo-L-proline + ATP + 2 H2O = L-glutamate + ADP + phosphate + H(+). Functionally, catalyzes the cleavage of 5-oxoproline to form L-glutamate coupled to the hydrolysis of ATP to ADP and inorganic phosphate. In Thermus thermophilus (strain ATCC BAA-163 / DSM 7039 / HB27), this protein is 5-oxoprolinase subunit A.